The chain runs to 427 residues: Glutamate-1-semialdehyde 2,1-aminomutase (427 aa).

At Lys-265 the chain carries N6-(pyridoxal phosphate)lysine.

Belongs to the class-III pyridoxal-phosphate-dependent aminotransferase family. HemL subfamily. Homodimer. Pyridoxal 5'-phosphate serves as cofactor.

The protein localises to the cytoplasm. The enzyme catalyses (S)-4-amino-5-oxopentanoate = 5-aminolevulinate. Its pathway is porphyrin-containing compound metabolism; protoporphyrin-IX biosynthesis; 5-aminolevulinate from L-glutamyl-tRNA(Glu): step 2/2. The polypeptide is Glutamate-1-semialdehyde 2,1-aminomutase (Bordetella pertussis (strain Tohama I / ATCC BAA-589 / NCTC 13251)).